The sequence spans 267 residues: Imidazole glycerol phosphate synthase subunit HisF (267 aa).

Active-site residues include D22 and D141.

Belongs to the HisA/HisF family. In terms of assembly, heterodimer of HisH and HisF.

The protein resides in the cytoplasm. The enzyme catalyses 5-[(5-phospho-1-deoxy-D-ribulos-1-ylimino)methylamino]-1-(5-phospho-beta-D-ribosyl)imidazole-4-carboxamide + L-glutamine = D-erythro-1-(imidazol-4-yl)glycerol 3-phosphate + 5-amino-1-(5-phospho-beta-D-ribosyl)imidazole-4-carboxamide + L-glutamate + H(+). It functions in the pathway amino-acid biosynthesis; L-histidine biosynthesis; L-histidine from 5-phospho-alpha-D-ribose 1-diphosphate: step 5/9. In terms of biological role, IGPS catalyzes the conversion of PRFAR and glutamine to IGP, AICAR and glutamate. The HisF subunit catalyzes the cyclization activity that produces IGP and AICAR from PRFAR using the ammonia provided by the HisH subunit. The polypeptide is Imidazole glycerol phosphate synthase subunit HisF (Mycobacterium bovis (strain ATCC BAA-935 / AF2122/97)).